A 316-amino-acid polypeptide reads, in one-letter code: MATMKIPMTVPSPRVDADQLFKAFKGRGCDTSVIINILAHRNATQRALIEQEYETKFSDDLRKRLHSELHGHLKKAVLLWMPEAVERDASILKRSLRGAVTDHKAIAEIICTRSGSQLRQIKQVYSNTFGVKLEEDIESEASGNHKRVLLAYLNTTRYEGPEIDNASVENDARTLKSAVARKHKSDDQTLIQIFTDRSRTHLVAVRSTYRSMYGKELGKAIRDETRGNFEHVLLTILQCAENSCFYFAKALRKSMKGLGTDDTALIRIVVTRAEVDMQFIITEYRKRYKKTLYNAVHSDTTSHYRTFLLSLLGPNV.

At alanine 2 the chain carries N-acetylalanine. 4 Annexin repeats span residues 11–82 (PSPR…LWMP), 83–154 (EAVE…AYLN), 166–238 (ASVE…TILQ), and 242–313 (NSCF…SLLG). 4 residues coordinate Ca(2+): phenylalanine 24, glycine 26, glycine 28, and glutamate 68. Serine 95 is subject to Phosphoserine. Residue threonine 112 is modified to Phosphothreonine. Glycine 259 is a binding site for Ca(2+). Tyrosine 284 carries the post-translational modification Phosphotyrosine. Residues aspartate 299 and threonine 300 each coordinate Ca(2+).

The protein belongs to the annexin (TC 1.A.31.1) family. As to expression, expressed mainly in roots and flowers. Lower in stems and leaves.

In Arabidopsis thaliana (Mouse-ear cress), this protein is Annexin D5 (ANN5).